Reading from the N-terminus, the 191-residue chain is uncharacterized protein (191 aa).

This is an uncharacterized protein from Bacillus subtilis (strain 168).